Consider the following 225-residue polypeptide: Uracil-DNA glycosylase (225 aa).

Asp65 serves as the catalytic Proton acceptor.

It belongs to the uracil-DNA glycosylase (UDG) superfamily. UNG family.

It is found in the cytoplasm. The enzyme catalyses Hydrolyzes single-stranded DNA or mismatched double-stranded DNA and polynucleotides, releasing free uracil.. In terms of biological role, excises uracil residues from the DNA which can arise as a result of misincorporation of dUMP residues by DNA polymerase or due to deamination of cytosine. In Bacillus thuringiensis (strain Al Hakam), this protein is Uracil-DNA glycosylase.